Here is a 1191-residue protein sequence, read N- to C-terminus: Probable inositol polyphosphate 5-phosphatase C9G1.10c (1191 aa).

Polar residues-rich tracts occupy residues 1-10 (MASRQGFSNV), 72-101 (QVSS…NPSN), 114-135 (SDSS…SFVS), 151-161 (SFQSSVQSTKG), and 181-193 (NFSS…SPIS). Residues 1 to 193 (MASRQGFSNV…SKAGSSSPIS (193 aa)) are disordered. At Ser195 the chain carries Phosphoserine. 3 disordered regions span residues 205 to 281 (SQSP…PQPV), 294 to 334 (SQQL…DASL), and 355 to 425 (IPEK…SSSS). The span at 268 to 280 (TPPPIPSPRPPQP) shows a compositional bias: pro residues. Residues 302-311 (SPRKPPKPPL) are compositionally biased toward basic residues. Composition is skewed to polar residues over residues 316 to 334 (TQRS…DASL), 367 to 382 (HTLS…SENL), and 400 to 413 (LATN…VSTE). Low complexity predominate over residues 414–425 (QSDPSVAASSSS).

Belongs to the inositol 1,4,5-trisphosphate 5-phosphatase family.

Its subcellular location is the cytoplasm. This chain is Probable inositol polyphosphate 5-phosphatase C9G1.10c, found in Schizosaccharomyces pombe (strain 972 / ATCC 24843) (Fission yeast).